A 513-amino-acid polypeptide reads, in one-letter code: MRLNVNEISDIIRNRIKQLDIGCETRNEGTITSVADGVIYIHGLSNVMQGEMIALPYNKFAIALNLESSATGAIVMGSYENISEGMVVKCTGDILRVPVGPELLGRVVNALGVPIDNKGLINCSNYYPIESDAPGVIDRQSINEPIQTGYKSIDSMVPIGRGQRELIIGDRQTGKSALAIDTIINQSCSGVKCIYVAIGQKATTVVNVVKKLEEYHALDNTIVILASASESAILQYLAPYSGCAMGEYFRNNGQDALIVYDDLSKQAVAYRQLSLLLRRPPGREAYPGDIFYLHSRLLERSAKVRSEYIERCTQGKITGKTGSLTALPIIETQAGDVSAFIPTNVISITDGQIFLESQLFNAGVRPAINPGISVSRVGGSAQTKIMKVLSGGIRTALAQYRELAAFSQFSSELDNVTRKQLQHGQKVTELLKQKQYSCMSVACQAIILFAVSYGYLEDIELSKIGDFEAKLISYLTYHELELVKHINIYGSYDSNIENKLKNILEMFKLNKFS.

169-176 contacts ATP; it reads GDRQTGKS.

The protein belongs to the ATPase alpha/beta chains family. As to quaternary structure, F-type ATPases have 2 components, CF(1) - the catalytic core - and CF(0) - the membrane proton channel. CF(1) has five subunits: alpha(3), beta(3), gamma(1), delta(1), epsilon(1). CF(0) has three main subunits: a(1), b(2) and c(9-12). The alpha and beta chains form an alternating ring which encloses part of the gamma chain. CF(1) is attached to CF(0) by a central stalk formed by the gamma and epsilon chains, while a peripheral stalk is formed by the delta and b chains.

The protein resides in the cell inner membrane. The enzyme catalyses ATP + H2O + 4 H(+)(in) = ADP + phosphate + 5 H(+)(out). In terms of biological role, produces ATP from ADP in the presence of a proton gradient across the membrane. The alpha chain is a regulatory subunit. This is ATP synthase subunit alpha from Blochmanniella floridana.